Consider the following 313-residue polypeptide: Alpha/beta-gliadin clone PW8142 (313 aa).

A signal peptide spans 1 to 20 (MKTFLILALVATTATTAVRV). Residues 22–55 (VPQLQPKNPSQQQPQEQVPLVQQQQFPGQQQQFP) are compositionally biased toward low complexity. Disordered regions lie at residues 22–122 (VPQL…QQAQ) and 234–272 (QQPS…VQPQ). Composition is skewed to pro residues over residues 56 to 68 (PQQP…PFPS) and 78 to 101 (FPQP…PQQP). Composition is skewed to low complexity over residues 102–122 (YPQQ…QQAQ) and 234–264 (QQPS…QNPQ).

It belongs to the gliadin/glutenin family. In terms of processing, substrate of transglutaminase.

Functionally, gliadin is the major seed storage protein in wheat. This Triticum aestivum (Wheat) protein is Alpha/beta-gliadin clone PW8142.